Reading from the N-terminus, the 132-residue chain is Phosphoribosyl-AMP cyclohydrolase (132 aa).

Aspartate 79 provides a ligand contact to Mg(2+). Residue cysteine 80 coordinates Zn(2+). The Mg(2+) site is built by aspartate 81 and aspartate 83. Residues cysteine 100 and cysteine 107 each coordinate Zn(2+).

This sequence belongs to the PRA-CH family. As to quaternary structure, homodimer. Mg(2+) serves as cofactor. Zn(2+) is required as a cofactor.

It localises to the cytoplasm. The catalysed reaction is 1-(5-phospho-beta-D-ribosyl)-5'-AMP + H2O = 1-(5-phospho-beta-D-ribosyl)-5-[(5-phospho-beta-D-ribosylamino)methylideneamino]imidazole-4-carboxamide. It functions in the pathway amino-acid biosynthesis; L-histidine biosynthesis; L-histidine from 5-phospho-alpha-D-ribose 1-diphosphate: step 3/9. Catalyzes the hydrolysis of the adenine ring of phosphoribosyl-AMP. The chain is Phosphoribosyl-AMP cyclohydrolase from Acidovorax ebreus (strain TPSY) (Diaphorobacter sp. (strain TPSY)).